The sequence spans 331 residues: Adenosine deaminase (331 aa).

Residues H12 and H14 each coordinate Zn(2+). The substrate site is built by H14, D16, and G170. H197 contributes to the Zn(2+) binding site. Catalysis depends on E200, which acts as the Proton donor. Position 278 (D278) interacts with Zn(2+).

It belongs to the metallo-dependent hydrolases superfamily. Adenosine and AMP deaminases family. Adenosine deaminase subfamily. It depends on Zn(2+) as a cofactor.

It carries out the reaction adenosine + H2O + H(+) = inosine + NH4(+). The enzyme catalyses 2'-deoxyadenosine + H2O + H(+) = 2'-deoxyinosine + NH4(+). Its function is as follows. Catalyzes the hydrolytic deamination of adenosine and 2-deoxyadenosine. The chain is Adenosine deaminase from Vibrio vulnificus (strain CMCP6).